We begin with the raw amino-acid sequence, 244 residues long: rRNA adenine N-6-methyltransferase (244 aa).

Residues Asn-11, Ile-13, Gly-38, Glu-59, Asp-84, and Ser-101 each contribute to the S-adenosyl-L-methionine site.

This sequence belongs to the class I-like SAM-binding methyltransferase superfamily. rRNA adenine N(6)-methyltransferase family.

In terms of biological role, involved in erythromycin resistance. The polypeptide is rRNA adenine N-6-methyltransferase (ermG) (Lysinibacillus sphaericus (Bacillus sphaericus)).